We begin with the raw amino-acid sequence, 190 residues long: UPF0232 protein SCO3875 (190 aa).

2 disordered regions span residues 1–70 and 163–190; these read MSAD…GRDP and GPGGPGGPGRRYGPLRAPGSQGPGDTYG. Low complexity predominate over residues 26 to 35; it reads GVDLARVALR. Residues 36–45 show a composition bias toward basic and acidic residues; that stretch reads AAREAARARG. The span at 163 to 172 shows a compositional bias: gly residues; sequence GPGGPGGPGR.

It belongs to the UPF0232 family.

This Streptomyces coelicolor (strain ATCC BAA-471 / A3(2) / M145) protein is UPF0232 protein SCO3875.